Consider the following 187-residue polypeptide: Protein GrpE (187 aa).

The tract at residues 1–23 (MNNEKELKKEETSVENKEKKVAT) is disordered.

It belongs to the GrpE family. Homodimer.

Its subcellular location is the cytoplasm. Participates actively in the response to hyperosmotic and heat shock by preventing the aggregation of stress-denatured proteins, in association with DnaK and GrpE. It is the nucleotide exchange factor for DnaK and may function as a thermosensor. Unfolded proteins bind initially to DnaJ; upon interaction with the DnaJ-bound protein, DnaK hydrolyzes its bound ATP, resulting in the formation of a stable complex. GrpE releases ADP from DnaK; ATP binding to DnaK triggers the release of the substrate protein, thus completing the reaction cycle. Several rounds of ATP-dependent interactions between DnaJ, DnaK and GrpE are required for fully efficient folding. The sequence is that of Protein GrpE from Mesoplasma florum (strain ATCC 33453 / NBRC 100688 / NCTC 11704 / L1) (Acholeplasma florum).